Reading from the N-terminus, the 347-residue chain is Heat-inducible transcription repressor HrcA (347 aa).

This sequence belongs to the HrcA family.

Its function is as follows. Negative regulator of class I heat shock genes (grpE-dnaK-dnaJ and groELS operons). Prevents heat-shock induction of these operons. The chain is Heat-inducible transcription repressor HrcA from Lactococcus lactis subsp. cremoris (strain SK11).